We begin with the raw amino-acid sequence, 151 residues long: MSQIQTLHSLLEPTVTGLGYELVGVELTGAKGNRTLRVYIDTPAGIRLEDCEAVSHQVSGLLDVEDPIEGAYNLEVSSPGLDRPIFKSADYDRFSGERIKLRLLELYEGRRRVKGVLLGLDGEFVRVRDVDGVELRIPLELIDRARLDLEP.

The protein belongs to the RimP family.

The protein localises to the cytoplasm. In terms of biological role, required for maturation of 30S ribosomal subunits. The chain is Ribosome maturation factor RimP from Halorhodospira halophila (strain DSM 244 / SL1) (Ectothiorhodospira halophila (strain DSM 244 / SL1)).